The primary structure comprises 176 residues: MSENIAKRYVKALIEVCKKDELNDVLKGLKAIVSAFSVAKFNDIIKSPTVSKKDKISLILSFLKEPNVKIENLLKILMKNGRISLLPQIYDGIKESIALSNNEYQGKIYTKENLDEPTIKLLETNFSKKLNANIKFVCIAGNYTGVKIDISDLGYEISFSIDRLKSAMSEYILKAI.

Belongs to the ATPase delta chain family. As to quaternary structure, F-type ATPases have 2 components, F(1) - the catalytic core - and F(0) - the membrane proton channel. F(1) has five subunits: alpha(3), beta(3), gamma(1), delta(1), epsilon(1). F(0) has three main subunits: a(1), b(2) and c(10-14). The alpha and beta chains form an alternating ring which encloses part of the gamma chain. F(1) is attached to F(0) by a central stalk formed by the gamma and epsilon chains, while a peripheral stalk is formed by the delta and b chains.

The protein resides in the cell inner membrane. F(1)F(0) ATP synthase produces ATP from ADP in the presence of a proton or sodium gradient. F-type ATPases consist of two structural domains, F(1) containing the extramembraneous catalytic core and F(0) containing the membrane proton channel, linked together by a central stalk and a peripheral stalk. During catalysis, ATP synthesis in the catalytic domain of F(1) is coupled via a rotary mechanism of the central stalk subunits to proton translocation. Its function is as follows. This protein is part of the stalk that links CF(0) to CF(1). It either transmits conformational changes from CF(0) to CF(1) or is implicated in proton conduction. This Campylobacter hominis (strain ATCC BAA-381 / DSM 21671 / CCUG 45161 / LMG 19568 / NCTC 13146 / CH001A) protein is ATP synthase subunit delta.